The sequence spans 258 residues: Pyridoxine 5'-phosphate synthase (258 aa).

A 3-amino-2-oxopropyl phosphate-binding site is contributed by N6. Residue 8–9 (DH) coordinates 1-deoxy-D-xylulose 5-phosphate. Position 17 (R17) interacts with 3-amino-2-oxopropyl phosphate. The active-site Proton acceptor is H42. 1-deoxy-D-xylulose 5-phosphate is bound by residues R44 and H49. E69 functions as the Proton acceptor in the catalytic mechanism. Residue T99 coordinates 1-deoxy-D-xylulose 5-phosphate. The Proton donor role is filled by H213. Residues G214 and 235–236 (GQ) each bind 3-amino-2-oxopropyl phosphate.

Belongs to the PNP synthase family. In terms of assembly, homooctamer; tetramer of dimers.

The protein resides in the cytoplasm. The enzyme catalyses 3-amino-2-oxopropyl phosphate + 1-deoxy-D-xylulose 5-phosphate = pyridoxine 5'-phosphate + phosphate + 2 H2O + H(+). Its pathway is cofactor biosynthesis; pyridoxine 5'-phosphate biosynthesis; pyridoxine 5'-phosphate from D-erythrose 4-phosphate: step 5/5. Its function is as follows. Catalyzes the complicated ring closure reaction between the two acyclic compounds 1-deoxy-D-xylulose-5-phosphate (DXP) and 3-amino-2-oxopropyl phosphate (1-amino-acetone-3-phosphate or AAP) to form pyridoxine 5'-phosphate (PNP) and inorganic phosphate. The sequence is that of Pyridoxine 5'-phosphate synthase from Sulfurovum sp. (strain NBC37-1).